The sequence spans 231 residues: 7-cyano-7-deazaguanine synthase (231 aa).

7–17 contacts ATP; that stretch reads LSSGLDSVAAL. Zn(2+) contacts are provided by cysteine 195, cysteine 203, cysteine 206, and cysteine 209.

Belongs to the QueC family. Requires Zn(2+) as cofactor.

It catalyses the reaction 7-carboxy-7-deazaguanine + NH4(+) + ATP = 7-cyano-7-deazaguanine + ADP + phosphate + H2O + H(+). Its pathway is purine metabolism; 7-cyano-7-deazaguanine biosynthesis. Catalyzes the ATP-dependent conversion of 7-carboxy-7-deazaguanine (CDG) to 7-cyano-7-deazaguanine (preQ(0)). The chain is 7-cyano-7-deazaguanine synthase from Methanosarcina barkeri (strain Fusaro / DSM 804).